Consider the following 345-residue polypeptide: NADH-ubiquinone oxidoreductase chain 2 (345 aa).

The next 10 helical transmembrane spans lie at Pro3 to Ser23, Asn25 to Ala45, Tyr59 to Trp79, Ala95 to Pro115, Leu148 to Gly168, Ile177 to Met196, Ile201 to Ser223, Phe236 to Leu256, Asn273 to Leu293, and Phe322 to Ile342.

Belongs to the complex I subunit 2 family.

The protein localises to the mitochondrion inner membrane. It catalyses the reaction a ubiquinone + NADH + 5 H(+)(in) = a ubiquinol + NAD(+) + 4 H(+)(out). Functionally, core subunit of the mitochondrial membrane respiratory chain NADH dehydrogenase (Complex I) that is believed to belong to the minimal assembly required for catalysis. Complex I functions in the transfer of electrons from NADH to the respiratory chain. The immediate electron acceptor for the enzyme is believed to be ubiquinone. In Polypterus ornatipinnis (Ornate bichir), this protein is NADH-ubiquinone oxidoreductase chain 2 (MT-ND2).